A 940-amino-acid polypeptide reads, in one-letter code: Gamma-aminobutyric acid type B receptor subunit 2 (940 aa).

An N-terminal signal peptide occupies residues 1–40; the sequence is MASPPSSGQPRPPPPPPPPARLLLPLLLSLLLSLAPGAWG. Residues 41-482 are Extracellular-facing; that stretch reads WARGAPRPPP…LRKISLPLYS (442 aa). The N-linked (GlcNAc...) asparagine glycan is linked to asparagine 89. Cystine bridges form between cysteine 107-cysteine 134, cysteine 236-cysteine 265, and cysteine 264-cysteine 301. Residues asparagine 297, asparagine 388, asparagine 403, and asparagine 452 are each glycosylated (N-linked (GlcNAc...) asparagine). Residues 483–503 form a helical membrane-spanning segment; the sequence is ILSALTILGMIMASAFLFFNI. Residues 504-521 are Cytoplasmic-facing; sequence KNRNQKLIKMSSPYMNNL. A helical transmembrane segment spans residues 522–542; sequence IILGGMLSYASIFLFGLDGSF. Residues 543–550 are Extracellular-facing; that stretch reads VSEKTFET. The chain crosses the membrane as a helical span at residues 551-571; sequence LCTVRTWILTVGYTTAFGAMF. Over 572–596 the chain is Cytoplasmic; sequence AKTWRVHAIFKNVKMKKKIIKDQKL. A helical transmembrane segment spans residues 597–617; it reads LVIVGGMLLIDLCILICWQAV. The Extracellular segment spans residues 618 to 653; that stretch reads DPLRRTVERYSMEPDPAGRDISIRPLLEHCENTHMT. A helical transmembrane segment spans residues 654 to 674; the sequence is IWLGIVYAYKGLLMLFGCFLA. At 675–690 the chain is on the cytoplasmic side; that stretch reads WETRNVSIPALNDSKY. The helical transmembrane segment at 691–711 threads the bilayer; it reads IGMSVYNVGIMCIIGAAVSFL. At 712–719 the chain is on the extracellular side; the sequence is TRDQPNVQ. A helical transmembrane segment spans residues 720 to 740; sequence FCIVALVIIFCSTITLCLVFV. The Cytoplasmic portion of the chain corresponds to 741–940; sequence PKLITLRTNP…PSFRVMVSGL (200 aa). A disordered region spans residues 762–789; the sequence is TQNQKKEDSKTSTSVTSVNQASTSRLEG. The span at 772-786 shows a compositional bias: polar residues; sequence TSTSVTSVNQASTSR. Residues serine 775 and serine 778 each carry the phosphoserine modification. A coiled-coil region spans residues 781 to 818; the sequence is QASTSRLEGLQSENHRLRMKITELDKDLEEVTMQLQDT. Phosphothreonine is present on threonine 818. 6 positions are modified to phosphoserine: serine 883, serine 892, serine 912, serine 915, serine 919, and serine 923.

The protein belongs to the G-protein coupled receptor 3 family. GABA-B receptor subfamily. In terms of assembly, heterodimer of GABBR1 and GABBR2. Homodimers may form, but are inactive. Interacts (via C-terminus) with ATF4 (via leucine zipper domain).

Its subcellular location is the cell membrane. It localises to the postsynaptic cell membrane. In terms of biological role, component of a heterodimeric G-protein coupled receptor for GABA, formed by GABBR1 and GABBR2. Within the heterodimeric GABA receptor, only GABBR1 seems to bind agonists, while GABBR2 mediates coupling to G proteins. Ligand binding causes a conformation change that triggers signaling via guanine nucleotide-binding proteins (G proteins) and modulates the activity of down-stream effectors, such as adenylate cyclase. Signaling inhibits adenylate cyclase, stimulates phospholipase A2, activates potassium channels, inactivates voltage-dependent calcium-channels and modulates inositol phospholipid hydrolysis. Plays a critical role in the fine-tuning of inhibitory synaptic transmission. Pre-synaptic GABA receptor inhibits neurotransmitter release by down-regulating high-voltage activated calcium channels, whereas postsynaptic GABA receptor decreases neuronal excitability by activating a prominent inwardly rectifying potassium (Kir) conductance that underlies the late inhibitory postsynaptic potentials. Not only implicated in synaptic inhibition but also in hippocampal long-term potentiation, slow wave sleep, muscle relaxation and antinociception. Interacts with KCTD8, KCTD12 and KCTD16; this interaction determines the pharmacology and kinetics of the receptor response, the KCTD proteins markedly accelerating the GABA-B response, although to different extents. This is Gamma-aminobutyric acid type B receptor subunit 2 (Gabbr2) from Mus musculus (Mouse).